Reading from the N-terminus, the 232-residue chain is 2,3-bisphosphoglycerate-dependent phosphoglycerate mutase (232 aa).

Substrate is bound by residues 8-15, 21-22, Arg-60, 87-90, Lys-98, 114-115, and 183-184; these read RHGESLWN, TG, ERHY, RR, and GN. Residue His-9 is the Tele-phosphohistidine intermediate of the active site. Glu-87 (proton donor/acceptor) is an active-site residue.

This sequence belongs to the phosphoglycerate mutase family. BPG-dependent PGAM subfamily.

It catalyses the reaction (2R)-2-phosphoglycerate = (2R)-3-phosphoglycerate. The protein operates within carbohydrate degradation; glycolysis; pyruvate from D-glyceraldehyde 3-phosphate: step 3/5. Functionally, catalyzes the interconversion of 2-phosphoglycerate and 3-phosphoglycerate. In Clostridium beijerinckii (strain ATCC 51743 / NCIMB 8052) (Clostridium acetobutylicum), this protein is 2,3-bisphosphoglycerate-dependent phosphoglycerate mutase.